The primary structure comprises 425 residues: Inhibin beta A chain (425 aa).

The signal sequence occupies residues 1–20; sequence MPLLWLRGFLLASCWIIVRS. Positions 21–309 are excised as a propeptide; the sequence is SPTPGSEGHS…EDHPHRRRRR (289 aa). Asn-165 carries N-linked (GlcNAc...) asparagine glycosylation. A disordered region spans residues 259-289; the sequence is KKKKKEEEGEGKKRDGEGGAGGDEEKEQSHR. Positions 263-275 are enriched in basic and acidic residues; the sequence is KEEEGEGKKRDGE. Intrachain disulfides connect Cys-313–Cys-321, Cys-320–Cys-390, Cys-349–Cys-422, and Cys-353–Cys-424.

The protein belongs to the TGF-beta family. Dimeric, linked by one or more disulfide bonds. Inhibin A is a dimer of alpha/INHA and beta-A/INHBA. Activin A is a homodimer of beta-A/INHBA. Activin AB is a dimer of beta-A/INHBA and beta-B/INHBB. Interacts with FST and FSTL3; these interactions prevent activin A interaction to its type II receptor. Activin A interacts with ACVR2A. Activin A interacts with BMPR2. Inhibin A interacts with ACVR1; this interaction creates a non-signaling complex (NSC) that inhibits ACVR1-mediated BMP signaling. Inhibin A interacts with ACVR2A.

It localises to the secreted. Functionally, inhibins/activins are involved in regulating a number of diverse functions such as hypothalamic and pituitary hormone secretion, gonadal hormone secretion, germ cell development and maturation, erythroid differentiation, insulin secretion, nerve cell survival, embryonic axial development or bone growth, depending on their subunit composition. Activin A is a homodimer of INHBA that plays a role in several essential biological processes including embryonic development, stem cell maintenance and differentiation, haematopoiesis, cell proliferation and tissue fibrosis. Signals through type I (such as ACVR1B or ACVR1C) and type II receptors (such as ACVR2A, ACVR2B or BMPR2) which, upon ligand binding, phosphorylate SMAD2 and SMAD3 intracellular signaling mediators that form a complex with SMAD4, translocate to the nucleus and modulate gene expression. Can also activate alternative non-canonical intracellular signaling pathways including the p38 MAPK, extracellular signal-regulated kinases 1/2 (ERK1/2) and c-Jun N-terminal kinases (JNKs) to modulate cell migration and differentiation. Alternatively, promotes osteoblastic differentiation via ACVRL1-SMAD1/5/9 pathway. In addition, can engage the type I receptor ACVR1 to form an ACVR1-activin A-type II receptor non-signaling complex (NSC) that renders receptors unavailable for engagement with BMPs, hence resulting in an apparent inhibition of ACVR1-mediated BMP signaling. In terms of biological role, inhibin A is a dimer of alpha/INHA and beta-A/INHBA that functions as a feedback regulator in the hypothalamic-pituitary-gonadal (HPG) axis. Inhibits the secretion of FSH from the anterior pituitary gland by acting on pituitary gonadotrope cells. Antagonizes activin A by binding to the proteoglycan, betaglycan, and forming a stable complex with and, thereby, sequestering type II activin receptors while excluding type I receptor. This chain is Inhibin beta A chain (INHBA), found in Bos taurus (Bovine).